A 506-amino-acid chain; its full sequence is Sucrose transport protein SUT3 (506 aa).

Residues 1-20 lie on the Cytoplasmic side of the membrane; sequence MAVDMELDGGGDGKGKAPPQ. A helical transmembrane segment spans residues 21 to 41; that stretch reads ISLSGLFLACMVAGGVQYGWA. At 42–54 the chain is on the extracellular side; the sequence is LQLSLLTPYVQTL. The chain crosses the membrane as a helical span at residues 55 to 75; the sequence is GIPHALTSVMWLCGPIAGLIV. Topologically, residues 76–94 are cytoplasmic; it reads QPCVGLYSDKCTSSLGRRR. A helical membrane pass occupies residues 95–115; it reads PFILTGCIIICISVIVIGFSS. Residues 116 to 135 lie on the Extracellular side of the membrane; the sequence is DIGYALGDTTEDCKVYRGPR. Residues 136–156 form a helical membrane-spanning segment; sequence YHAAAAFILGFWLLDFSNNTV. Over 157 to 171 the chain is Cytoplasmic; the sequence is QGPARALMADLSGRH. A helical transmembrane segment spans residues 172–192; sequence GPSAANAIFCSWMALGNILGY. Over 193 to 220 the chain is Extracellular; sequence SSGSTNDWHKWFPFLMTRACCEACANLK. Residues 221–241 form a helical membrane-spanning segment; sequence AAFLVAVVFLGLSTAVTMVFA. The Cytoplasmic portion of the chain corresponds to 242-275; it reads REVALDPVAAAKRNEGEASGLLAVFKGMKNLPVG. A helical transmembrane segment spans residues 276 to 296; that stretch reads MPSVLIVTGLTWLSWFPFILF. Over 297–327 the chain is Extracellular; the sequence is DTDWMGREIYHGRPDGSPAEVTAFQEGVRQG. Residues 328–348 form a helical membrane-spanning segment; it reads AFGLLLNSIVLGISSFLIEPM. Topologically, residues 349–355 are cytoplasmic; that stretch reads CRRLGAR. The helical transmembrane segment at 356–376 threads the bilayer; that stretch reads AVWVMSSAVVCVAMAAVSVLS. Residues 377–404 are Extracellular-facing; sequence AWSLGDFGGSVQDAARAPAEEGGVRASA. The chain crosses the membrane as a helical span at residues 405 to 425; sequence LALFVFLGLPFAVLCSVPFAV. Topologically, residues 426–441 are cytoplasmic; that stretch reads TAQLAASRGGGQGLCT. The chain crosses the membrane as a helical span at residues 442 to 462; the sequence is GVLNISIVVPQMAIALGAGPW. Over 463 to 470 the chain is Extracellular; sequence DELFGEGN. Residues 471-491 form a helical membrane-spanning segment; the sequence is IPAFAMASVFAAAAAAAGVVL. Residues 492-506 lie on the Cytoplasmic side of the membrane; sequence LPKVSVRSVSMAGGH.

This sequence belongs to the glycoside-pentoside-hexuronide (GPH) cation symporter transporter (TC 2.A.2.4) family. In terms of assembly, homodimer. Widely expressed. Highest expression in sink leaves and lowest in germinating seeds.

Its subcellular location is the cell membrane. Its pathway is glycan biosynthesis; sucrose metabolism. Responsible for the transport of sucrose into the cell, with the concomitant uptake of protons (symport system). May also transport other glucosides. This chain is Sucrose transport protein SUT3 (SUT3), found in Oryza sativa subsp. japonica (Rice).